We begin with the raw amino-acid sequence, 357 residues long: GDP-mannose transporter 2 (357 aa).

Over 1 to 43 (MASTRNGISKDELLPTYELQSQRDVENSGSVTSFASKISNNAA) the chain is Cytoplasmic. Residues 44–64 (AAVLAYCLSSISMTLVNKYVV) form a helical membrane-spanning segment. Residues 65–68 (SGAS) are Lumenal-facing. The helical transmembrane segment at 69–89 (WNLSFLYLAIQSFIGTVAIMV) threads the bilayer. At 90–107 (CKKAGLIQNLGLFDLKKA) the chain is on the cytoplasmic side. A helical membrane pass occupies residues 108-128 (QTWLPISLLLVGMIYTGNKAL). Position 129 (Gln129) is a topological domain, lumenal. A helical membrane pass occupies residues 130–150 (FLSVPVYTIFKNLTIIVIAYG). Over 151–161 (EVFMVGGSVKP) the chain is Cytoplasmic. The helical transmembrane segment at 162–182 (LALLSFGLMVLSSVVAAWADI) threads the bilayer. Residues 183–196 (QIATAATAKASSDS) are Lumenal-facing. A helical transmembrane segment spans residues 197–217 (AVATLSALNAGYAWMGTNVVF). Topologically, residues 218–238 (SASYALGMRRVIKKTNFDNWD) are cytoplasmic. The chain crosses the membrane as a helical span at residues 239 to 259 (VMFYNNLLSVPILLLSSLLVE). At 260-277 (DWSSENLQRNFPAESRQS) the chain is on the lumenal side. Residues 278–298 (LVIGIFYSGVAAIFISYCTAW) form a helical membrane-spanning segment. Residues 299–306 (CVRATSST) lie on the Cytoplasmic side of the membrane. The chain crosses the membrane as a helical span at residues 307–327 (TYAMVGALNKLPLAVAGIVFF). The Lumenal segment spans residues 328–332 (AAPVT). Residues 333-352 (FGSVSAIVLGFISGLVYTWA) form a helical membrane-spanning segment. Residues 353 to 357 (KSTGA) are Cytoplasmic-facing.

Belongs to the TPT transporter family. SLC35D subfamily. In terms of assembly, homooligomer.

It is found in the golgi apparatus membrane. The protein resides in the cytoplasmic vesicle membrane. Its subcellular location is the endoplasmic reticulum membrane. Functionally, involved in the import of GDP-mannose from the cytoplasm into the Golgi lumen. The chain is GDP-mannose transporter 2 (gmt2) from Emericella nidulans (strain FGSC A4 / ATCC 38163 / CBS 112.46 / NRRL 194 / M139) (Aspergillus nidulans).